The sequence spans 259 residues: Glutamate racemase (259 aa).

Substrate is bound by residues 7 to 8 and 39 to 40; these read DS and YG. The active-site Proton donor/acceptor is cysteine 70. 71–72 serves as a coordination point for substrate; the sequence is NS. The Proton donor/acceptor role is filled by cysteine 180. Residue 181-182 participates in substrate binding; it reads TH.

This sequence belongs to the aspartate/glutamate racemases family.

The enzyme catalyses L-glutamate = D-glutamate. Its pathway is cell wall biogenesis; peptidoglycan biosynthesis. Functionally, provides the (R)-glutamate required for cell wall biosynthesis. This is Glutamate racemase from Hydrogenobaculum sp. (strain Y04AAS1).